The following is a 520-amino-acid chain: ADP,ATP carrier protein 4 (520 aa).

Transmembrane regions (helical) follow at residues Leu43–Ile63, Ile80–Val100, Ile111–Phe131, Phe166–Trp186, Phe201–Glu221, Phe240–Ile260, Leu305–Lys325, Ala339–Leu359, Phe370–Val390, Leu399–Ile419, Leu462–Ser482, and Ser485–Val505.

The protein belongs to the ADP/ATP translocase tlc family.

Its subcellular location is the cell membrane. Provides the rickettsial cell with host ATP in exchange for rickettsial ADP. This is an obligate exchange system. This energy acquiring activity is an important component of rickettsial parasitism. In Rickettsia bellii (strain RML369-C), this protein is ADP,ATP carrier protein 4 (tlcD).